The following is an 803-amino-acid chain: Phosphoribosylformylglycinamidine synthase subunit PurL (803 aa).

His65 is a catalytic residue. ATP contacts are provided by Tyr68 and Lys107. Glu109 is a binding site for Mg(2+). Substrate-binding positions include 110–113 (SHNH) and Arg132. His111 serves as the catalytic Proton acceptor. Residue Asp133 participates in Mg(2+) binding. Residue Gln256 coordinates substrate. A Mg(2+)-binding site is contributed by Asp284. 328–330 (ESQ) lines the substrate pocket. 2 residues coordinate ATP: Asn537 and Gly574. Asn575 is a Mg(2+) binding site. Ser577 is a binding site for substrate.

This sequence belongs to the FGAMS family. Monomer. Part of the FGAM synthase complex composed of 1 PurL, 1 PurQ and 2 PurS subunits.

It is found in the cytoplasm. It catalyses the reaction N(2)-formyl-N(1)-(5-phospho-beta-D-ribosyl)glycinamide + L-glutamine + ATP + H2O = 2-formamido-N(1)-(5-O-phospho-beta-D-ribosyl)acetamidine + L-glutamate + ADP + phosphate + H(+). The protein operates within purine metabolism; IMP biosynthesis via de novo pathway; 5-amino-1-(5-phospho-D-ribosyl)imidazole from N(2)-formyl-N(1)-(5-phospho-D-ribosyl)glycinamide: step 1/2. In terms of biological role, part of the phosphoribosylformylglycinamidine synthase complex involved in the purines biosynthetic pathway. Catalyzes the ATP-dependent conversion of formylglycinamide ribonucleotide (FGAR) and glutamine to yield formylglycinamidine ribonucleotide (FGAM) and glutamate. The FGAM synthase complex is composed of three subunits. PurQ produces an ammonia molecule by converting glutamine to glutamate. PurL transfers the ammonia molecule to FGAR to form FGAM in an ATP-dependent manner. PurS interacts with PurQ and PurL and is thought to assist in the transfer of the ammonia molecule from PurQ to PurL. This chain is Phosphoribosylformylglycinamidine synthase subunit PurL, found in Prochlorococcus marinus (strain NATL1A).